Consider the following 248-residue polypeptide: 14-3-3 protein homolog 2 (248 aa).

The protein belongs to the 14-3-3 family.

The sequence is that of 14-3-3 protein homolog 2 from Echinococcus multilocularis (Fox tapeworm).